The primary structure comprises 379 residues: Cysteine-rich receptor-like protein kinase 44 (379 aa).

The 281-residue stretch at 56–336 folds into the Protein kinase domain; sequence FSPYNHLGEG…VRMLNANSFT (281 aa). ATP is bound by residues 62-70 and Lys-84; that span reads LGEGGFGAV. Phosphotyrosine is present on Tyr-129. Asp-181 functions as the Proton acceptor in the catalytic mechanism. Residue Ser-185 is modified to Phosphoserine. The residue at position 223 (Thr-223) is a Phosphothreonine. At Tyr-231 the chain carries Phosphotyrosine.

This sequence belongs to the protein kinase superfamily. Ser/Thr protein kinase family. CRK subfamily.

It catalyses the reaction L-seryl-[protein] + ATP = O-phospho-L-seryl-[protein] + ADP + H(+). The catalysed reaction is L-threonyl-[protein] + ATP = O-phospho-L-threonyl-[protein] + ADP + H(+). In Arabidopsis thaliana (Mouse-ear cress), this protein is Cysteine-rich receptor-like protein kinase 44.